The chain runs to 1074 residues: Chitin synthase 2 (1074 aa).

3 disordered regions span residues 1–32 (MSHY…AHSG), 56–179 (QAAP…PSQH), and 209–255 (RSDS…PYNN). Residues 19–29 (DQQQPYYTDQA) show a composition bias toward polar residues. Residues 68-80 (RIRSNSSGSRSVS) are compositionally biased toward low complexity. N-linked (GlcNAc...) asparagine glycosylation is found at Asn72 and Asn97. The span at 85–119 (AYTNQGIPPVPSNLSAARQRSDPSQALPPSSSSYA) shows a compositional bias: polar residues. Residues 129–143 (SSHRNAPNAPNSNHP) are compositionally biased toward low complexity. Asn149 is a glycosylation site (N-linked (GlcNAc...) asparagine). Asn289 carries an N-linked (GlcNAc...) asparagine glycan. 8 helical membrane-spanning segments follow: residues 608 to 628 (VFGF…KALL), 742 to 762 (LVLL…FYFL), 779 to 799 (GAAI…VVLV), 817 to 837 (IIIF…TIYL), 867 to 887 (IVIS…LHLE), 891 to 911 (MLTS…ILSM), 1001 to 1021 (LVLI…STWW), and 1048 to 1068 (IFWS…TFLL).

Belongs to the chitin synthase family. Class II subfamily.

The protein resides in the cell membrane. Its subcellular location is the cytoplasmic vesicle membrane. The enzyme catalyses [(1-&gt;4)-N-acetyl-beta-D-glucosaminyl](n) + UDP-N-acetyl-alpha-D-glucosamine = [(1-&gt;4)-N-acetyl-beta-D-glucosaminyl](n+1) + UDP + H(+). Polymerizes chitin, a structural polymer of the cell wall and septum, by transferring the sugar moiety of UDP-GlcNAc to the non-reducing end of the growing chitin polymer. This Mycosarcoma maydis (Corn smut fungus) protein is Chitin synthase 2 (CHS2).